Here is an 83-residue protein sequence, read N- to C-terminus: Acyl carrier protein (83 aa).

The Carrier domain occupies 2–77 (NEILSKIKSI…DANQYIKKYL (76 aa)). S37 carries the O-(pantetheine 4'-phosphoryl)serine modification.

The protein belongs to the acyl carrier protein (ACP) family. 4'-phosphopantetheine is transferred from CoA to a specific serine of apo-ACP by AcpS. This modification is essential for activity because fatty acids are bound in thioester linkage to the sulfhydryl of the prosthetic group.

It is found in the cytoplasm. Its pathway is lipid metabolism; fatty acid biosynthesis. Carrier of the growing fatty acid chain in fatty acid biosynthesis. The sequence is that of Acyl carrier protein from Karelsulcia muelleri (strain GWSS) (Sulcia muelleri).